Consider the following 213-residue polypeptide: Charged multivesicular body protein 2b (213 aa).

Alanine 2 is modified (N-acetylalanine). A coiled-coil region spans residues 25-55; it reads QRAIIRDRAALEKQEKQLELEIKKMAKIGNK. Positions 178–202 are disordered; that stretch reads MAKAPSAARSLPSASTSKSTISDEE. Over residues 179–194 the composition is skewed to low complexity; it reads AKAPSAARSLPSASTS. Serine 199 carries the post-translational modification Phosphoserine. The short motif at 201 to 211 is the MIT-interacting motif element; it reads EEIERQLKALG.

Belongs to the SNF7 family. In terms of assembly, probable core component of the endosomal sorting required for transport complex III (ESCRT-III). ESCRT-III components are thought to multimerize to form a flat lattice on the perimeter membrane of the endosome. Several assembly forms of ESCRT-III may exist that interact and act sequentially. Interacts with CHMP2A. Interacts with VPS4A. Interacts with VPS4B; the interaction is direct.

It localises to the cytoplasm. It is found in the cytosol. The protein resides in the late endosome membrane. Functionally, probable core component of the endosomal sorting required for transport complex III (ESCRT-III) which is involved in multivesicular bodies (MVBs) formation and sorting of endosomal cargo proteins into MVBs. MVBs contain intraluminal vesicles (ILVs) that are generated by invagination and scission from the limiting membrane of the endosome and mostly are delivered to lysosomes enabling degradation of membrane proteins, such as stimulated growth factor receptors, lysosomal enzymes and lipids. The MVB pathway appears to require the sequential function of ESCRT-O, -I,-II and -III complexes. ESCRT-III proteins mostly dissociate from the invaginating membrane before the ILV is released. The ESCRT machinery also functions in topologically equivalent membrane fission events, such as the terminal stages of cytokinesis and the budding of enveloped viruses (lentiviruses). ESCRT-III proteins are believed to mediate the necessary vesicle extrusion and/or membrane fission activities, possibly in conjunction with the AAA ATPase VPS4. The protein is Charged multivesicular body protein 2b (CHMP2B) of Bos taurus (Bovine).